A 466-amino-acid polypeptide reads, in one-letter code: Alpha-1A adrenergic receptor (466 aa).

Over 1–25 the chain is Extracellular; it reads MVFLSGNASDSSNCTQPPAPVNIPK. Residues Asn-7 and Asn-13 are each glycosylated (N-linked (GlcNAc...) asparagine). Residues 26 to 51 form a helical membrane-spanning segment; it reads AILLGVILGVLILFGVPGNILVILSV. Residues 52-63 lie on the Cytoplasmic side of the membrane; sequence ACHRHLHSVTHY. Residues 64 to 89 form a helical membrane-spanning segment; that stretch reads YIVNLAVADLLLTSTVLPFSAIFEIL. The Extracellular segment spans residues 90–99; the sequence is GYWAFGRVFC. The chain crosses the membrane as a helical span at residues 100–122; the sequence is NIWAAVDVLCCTASIMSLCIISI. Residues 123-143 are Cytoplasmic-facing; it reads DRYIGVSYPLRYPTIVTQRRG. A helical membrane pass occupies residues 144–168; sequence LRALLCLWALSLVISIGPLFGWRQP. Residues 169-181 are Extracellular-facing; sequence APQDETICQINED. Residues 182-205 form a helical membrane-spanning segment; it reads PSYVLFSALGSFYVPLAIILVMYC. Topologically, residues 206–272 are cytoplasmic; sequence RVYVVAKRES…KFSREKKAAK (67 aa). A helical transmembrane segment spans residues 273 to 297; sequence TLGIVVGCFVLCWLPFFLVMPIGSF. At 298-304 the chain is on the extracellular side; the sequence is FPDFKPS. The chain crosses the membrane as a helical span at residues 305–329; it reads ETVFKIVFWLGYLNSCINPIIYPCS. At 330–466 the chain is on the cytoplasmic side; the sequence is SQEFKKAFQN…ISLSENGEEV (137 aa). The Nuclear localization signal signature appears at 334 to 349; that stretch reads KKAFQNVLKIQCLRRK. Cys-345 is lipidated: S-palmitoyl cysteine.

This sequence belongs to the G-protein coupled receptor 1 family. Adrenergic receptor subfamily. ADRA1A sub-subfamily. In terms of assembly, homo- and heterooligomer. Heterooligomerizes with ADRA1B homooligomers in cardiac myocytes. Interacts with CAVIN4.

It localises to the nucleus membrane. It is found in the cell membrane. Its subcellular location is the cytoplasm. The protein resides in the membrane. The protein localises to the caveola. Its function is as follows. This alpha-adrenergic receptor mediates its action by association with G proteins that activate a phosphatidylinositol-calcium second messenger system. Its effect is mediated by G(q) and G(11) proteins. Nuclear ADRA1A-ADRA1B heterooligomers regulate phenylephrine (PE)-stimulated ERK signaling in cardiac myocytes. The polypeptide is Alpha-1A adrenergic receptor (ADRA1A) (Cavia porcellus (Guinea pig)).